Consider the following 441-residue polypeptide: GTPase Der (441 aa).

EngA-type G domains follow at residues 4-169 and 178-353; these read PVVA…PDSS and PRVA…ENNS. GTP contacts are provided by residues 10 to 17, 57 to 61, 120 to 123, 184 to 191, 231 to 235, and 296 to 299; these read GRPNVGKS, DTGGI, NKVD, GKPNVGKS, DTAGL, and NKWD. Positions 354-438 constitute a KH-like domain; sequence MRVATGVLNE…ALKFITRERK (85 aa).

The protein belongs to the TRAFAC class TrmE-Era-EngA-EngB-Septin-like GTPase superfamily. EngA (Der) GTPase family. As to quaternary structure, associates with the 50S ribosomal subunit.

In terms of biological role, GTPase that plays an essential role in the late steps of ribosome biogenesis. The chain is GTPase Der from Agathobacter rectalis (strain ATCC 33656 / DSM 3377 / JCM 17463 / KCTC 5835 / VPI 0990) (Eubacterium rectale).